Here is a 148-residue protein sequence, read N- to C-terminus: uncharacterized protein (148 aa).

Residues 1-23 (MKALVAVSAVAVVALLGVSSAQA) form the signal peptide. A disordered region spans residues 22–45 (QADPEADPGAGEANYGGPPSSPRL).

To M.leprae ML2452.

This is an uncharacterized protein from Mycobacterium bovis (strain ATCC BAA-935 / AF2122/97).